The primary structure comprises 344 residues: Fructose-bisphosphate aldolase (344 aa).

Serine 53 serves as a coordination point for D-glyceraldehyde 3-phosphate. The Proton donor role is filled by aspartate 95. Residues histidine 96, aspartate 131, glutamate 161, and histidine 212 each contribute to the Zn(2+) site. A dihydroxyacetone phosphate-binding site is contributed by glycine 213. Histidine 252 lines the Zn(2+) pocket. Dihydroxyacetone phosphate is bound by residues 253 to 255 (GGS) and 274 to 277 (NVDT).

The protein belongs to the class II fructose-bisphosphate aldolase family. Zn(2+) is required as a cofactor.

It carries out the reaction beta-D-fructose 1,6-bisphosphate = D-glyceraldehyde 3-phosphate + dihydroxyacetone phosphate. It functions in the pathway carbohydrate degradation; glycolysis; D-glyceraldehyde 3-phosphate and glycerone phosphate from D-glucose: step 4/4. Its function is as follows. Catalyzes the aldol condensation of dihydroxyacetone phosphate (DHAP or glycerone-phosphate) with glyceraldehyde 3-phosphate (G3P) to form fructose 1,6-bisphosphate (FBP) in gluconeogenesis and the reverse reaction in glycolysis. The polypeptide is Fructose-bisphosphate aldolase (fba) (Mycobacterium bovis (strain ATCC BAA-935 / AF2122/97)).